The following is a 604-amino-acid chain: NADH-ubiquinone oxidoreductase chain 5 (604 aa).

Helical transmembrane passes span 2 to 22 (FSSL…LSIF), 41 to 61 (AFIT…ETII), 85 to 105 (MIFV…SLWY), 115 to 135 (FFKY…ANNL), 138 to 158 (LFIG…WWYG), 169 to 189 (AILY…WFLF), 209 to 231 (LPLL…HPWL), 239 to 259 (TPVS…FLLI), 271 to 291 (IQSL…ICAL), 299 to 318 (IIAF…IGIN), 323 to 345 (AFLH…GSII), 364 to 384 (MPFT…IPFL), 411 to 431 (LIAT…ALLG), 455 to 475 (LLIG…PTTV), 486 to 506 (LTAL…SLMT), and 582 to 602 (IKLY…LFNL).

This sequence belongs to the complex I subunit 5 family. In terms of assembly, core subunit of respiratory chain NADH dehydrogenase (Complex I) which is composed of 45 different subunits.

The protein resides in the mitochondrion inner membrane. The enzyme catalyses a ubiquinone + NADH + 5 H(+)(in) = a ubiquinol + NAD(+) + 4 H(+)(out). In terms of biological role, core subunit of the mitochondrial membrane respiratory chain NADH dehydrogenase (Complex I) which catalyzes electron transfer from NADH through the respiratory chain, using ubiquinone as an electron acceptor. Essential for the catalytic activity and assembly of complex I. This chain is NADH-ubiquinone oxidoreductase chain 5 (MT-ND5), found in Equus caballus (Horse).